Reading from the N-terminus, the 626-residue chain is MNVEVVKVMPQDLVTFKDVAIDFSQEEWQWMNPAQKRLYRSMMLENYQSLVSLGLCISKPYVISLLEQGREPWEMTSEMTRSPFSDWESIYVTQELPLKQFMYDDACMEGITSYGLECSTFEENWKWEDLFEKQMGSHEMFSKKEIITHKETITKETEFKYTKFGKCIHLENIEESIYNHTSDKKSFSKNSMVIKHKKVYVGKKLFKCNECDKTFTHSSSLTVHFRIHTGEKPYACEECGKAFKQRQHLAQHHRTHTGEKLFECKECRKAFKQSEHLIQHQRIHTGEKPYKCKECRKAFRQPAHLAQHQRIHTGEKPYECKECGKAFSDGSSFARHQRCHTGKRPYECIECGKAFRYNTSFIRHWRSYHTGEKPFNCIDCGKAFSVHIGLILHRRIHTGEKPYKCGVCGKTFSSGSSRTVHQRIHTGEKPYECDICGKDFSHHASLTQHQRVHSGEKPYECKECGKAFRQNVHLVSHLRIHTGEKPYECKECGKAFRISSQLATHQRIHTGEKPYECIECGNAFKQRSHLAQHQKTHTGEKPYECNECGKAFSQTSNLTQHQRIHTGEKPYKCTECGKAFSDSSSCAQHQRLHTGQRPYQCFECGKAFRRKLSLICHQRSHTGEEP.

The region spanning 14–85 (VTFKDVAIDF…TSEMTRSPFS (72 aa)) is the KRAB domain. 15 C2H2-type zinc fingers span residues 206 to 228 (FKCNECDKTFTHSSSLTVHFRIH), 234 to 256 (YACEECGKAFKQRQHLAQHHRTH), 262 to 284 (FECKECRKAFKQSEHLIQHQRIH), 290 to 312 (YKCKECRKAFRQPAHLAQHQRIH), 318 to 340 (YECKECGKAFSDGSSFARHQRCH), 346 to 369 (YECIECGKAFRYNTSFIRHWRSYH), 375 to 397 (FNCIDCGKAFSVHIGLILHRRIH), 403 to 425 (YKCGVCGKTFSSGSSRTVHQRIH), 431 to 453 (YECDICGKDFSHHASLTQHQRVH), 459 to 481 (YECKECGKAFRQNVHLVSHLRIH), 487 to 509 (YECKECGKAFRISSQLATHQRIH), 515 to 537 (YECIECGNAFKQRSHLAQHQKTH), 543 to 565 (YECNECGKAFSQTSNLTQHQRIH), 571 to 593 (YKCTECGKAFSDSSSCAQHQRLH), and 599 to 621 (YQCFECGKAFRRKLSLICHQRSH).

This sequence belongs to the krueppel C2H2-type zinc-finger protein family.

It is found in the nucleus. Its function is as follows. May be involved in transcriptional regulation. This chain is Zinc finger protein 471 (ZNF471), found in Homo sapiens (Human).